A 520-amino-acid polypeptide reads, in one-letter code: Laccase-4 (520 aa).

A signal peptide spans 1 to 18 (MGRFSSLCALTAVIHSFG). 3 Plastocyanin-like domains span residues 24–149 (IGPV…MVVY), 161–303 (VDDE…ILRY), and 370–491 (TVPV…FSED). N-linked (GlcNAc...) asparagine glycosylation is found at asparagine 73 and asparagine 76. Positions 86, 88, 131, and 133 each coordinate Cu cation. Disulfide bonds link cysteine 107/cysteine 509 and cysteine 139/cysteine 227. Residues asparagine 239 and asparagine 399 are each glycosylated (N-linked (GlcNAc...) asparagine). Histidine 418, histidine 421, histidine 423, histidine 473, cysteine 474, histidine 475, and histidine 479 together coordinate Cu cation. N-linked (GlcNAc...) asparagine glycosylation occurs at asparagine 497.

The protein belongs to the multicopper oxidase family. As to quaternary structure, homodimer. Requires Cu cation as cofactor.

Its subcellular location is the secreted. The enzyme catalyses 4 hydroquinone + O2 = 4 benzosemiquinone + 2 H2O. Lignin degradation and detoxification of lignin-derived products. The sequence is that of Laccase-4 (LCC4) from Trametes villosa (White-rot fungus).